A 488-amino-acid chain; its full sequence is Bifunctional protein GlmU (488 aa).

The interval 1-237 (MPRTRTPLAA…AEEASGVNDR (237 aa)) is pyrophosphorylase. UDP-N-acetyl-alpha-D-glucosamine is bound by residues 13–16 (LAAG), Lys27, Gln82, 87–88 (GT), 110–112 (SGD), Gly149, Glu164, Asn179, and Asn235. Position 112 (Asp112) interacts with Mg(2+). Asn235 contacts Mg(2+). A linker region spans residues 238-258 (IELARANRVMVGRLAEAFMRA). The interval 259–488 (GVTIEDPARF…KGRPAARRAS (230 aa)) is N-acetyltransferase. 2 residues coordinate UDP-N-acetyl-alpha-D-glucosamine: Arg341 and Lys359. Catalysis depends on His371, which acts as the Proton acceptor. Residues Tyr374 and Asn385 each coordinate UDP-N-acetyl-alpha-D-glucosamine. Acetyl-CoA contacts are provided by residues Ala388, 394–395 (NY), Ser413, Ala431, and Arg448. The interval 459–488 (AQRQAEKQMKGTATGPAPARKGRPAARRAS) is disordered. Residues 478–488 (RKGRPAARRAS) show a composition bias toward basic residues.

In the N-terminal section; belongs to the N-acetylglucosamine-1-phosphate uridyltransferase family. It in the C-terminal section; belongs to the transferase hexapeptide repeat family. In terms of assembly, homotrimer. Mg(2+) serves as cofactor.

The protein resides in the cytoplasm. The catalysed reaction is alpha-D-glucosamine 1-phosphate + acetyl-CoA = N-acetyl-alpha-D-glucosamine 1-phosphate + CoA + H(+). It carries out the reaction N-acetyl-alpha-D-glucosamine 1-phosphate + UTP + H(+) = UDP-N-acetyl-alpha-D-glucosamine + diphosphate. Its pathway is nucleotide-sugar biosynthesis; UDP-N-acetyl-alpha-D-glucosamine biosynthesis; N-acetyl-alpha-D-glucosamine 1-phosphate from alpha-D-glucosamine 6-phosphate (route II): step 2/2. It participates in nucleotide-sugar biosynthesis; UDP-N-acetyl-alpha-D-glucosamine biosynthesis; UDP-N-acetyl-alpha-D-glucosamine from N-acetyl-alpha-D-glucosamine 1-phosphate: step 1/1. It functions in the pathway bacterial outer membrane biogenesis; LPS lipid A biosynthesis. In terms of biological role, catalyzes the last two sequential reactions in the de novo biosynthetic pathway for UDP-N-acetylglucosamine (UDP-GlcNAc). The C-terminal domain catalyzes the transfer of acetyl group from acetyl coenzyme A to glucosamine-1-phosphate (GlcN-1-P) to produce N-acetylglucosamine-1-phosphate (GlcNAc-1-P), which is converted into UDP-GlcNAc by the transfer of uridine 5-monophosphate (from uridine 5-triphosphate), a reaction catalyzed by the N-terminal domain. This is Bifunctional protein GlmU from Anaeromyxobacter dehalogenans (strain 2CP-C).